Consider the following 406-residue polypeptide: Phosphorylase b kinase gamma catalytic chain, liver/testis isoform (406 aa).

The Protein kinase domain maps to 24-291; it reads YDPKDIIGRG…AEQALQHPFF (268 aa). ATP-binding positions include 30 to 38 and Lys53; that span reads IGRGVSSVV. Catalysis depends on Asp153, which acts as the Proton acceptor. Residues 306–330 are calmodulin-binding (domain-N); that stretch reads QRFRVAVWTILAAGRVALSSHRLRP. The segment at 346–370 is calmodulin-binding (domain-C); sequence VRRLIDNCAFRLYGHWVKKGEQQNR.

The protein belongs to the protein kinase superfamily. CAMK Ser/Thr protein kinase family. As to quaternary structure, hexadecamer of 4 heterotetramers, each composed of alpha, beta, gamma, and delta subunits. Alpha (PHKA1 or PHKA2) and beta (PHKB) are regulatory subunits, gamma (PHKG1 or PHKG2) is the catalytic subunit, and delta is calmodulin.

The catalysed reaction is 2 ATP + phosphorylase b = 2 ADP + phosphorylase a.. Functionally, catalytic subunit of the phosphorylase b kinase (PHK), which mediates the neural and hormonal regulation of glycogen breakdown (glycogenolysis) by phosphorylating and thereby activating glycogen phosphorylase. May regulate glycogeneolysis in the testis. In vitro, phosphorylates PYGM. The protein is Phosphorylase b kinase gamma catalytic chain, liver/testis isoform (Phkg2) of Mus musculus (Mouse).